The following is a 64-amino-acid chain: Large ribosomal subunit protein bL32 (64 aa).

Basic residues predominate over residues 1 to 16; it reads MAVQKSRKTRSRRGMR. Residues 1–64 form a disordered region; it reads MAVQKSRKTR…TPKESYEDEE (64 aa).

Belongs to the bacterial ribosomal protein bL32 family.

The protein is Large ribosomal subunit protein bL32 of Coxiella burnetii (strain CbuK_Q154) (Coxiella burnetii (strain Q154)).